A 76-amino-acid chain; its full sequence is Conotoxin VnMEKL-012 (76 aa).

A signal peptide spans methionine 1 to alanine 18. Positions leucine 19–alanine 42 are excised as a propeptide. Cystine bridges form between cysteine 49-cysteine 65, cysteine 56-cysteine 70, and cysteine 64-cysteine 74.

The protein belongs to the conotoxin O2 superfamily. As to expression, expressed by the venom duct.

The protein resides in the secreted. This is Conotoxin VnMEKL-012 from Conus ventricosus (Mediterranean cone).